The following is a 430-amino-acid chain: MGKNVVVLGTQWGDEGKGKIVDLLTEQVTHVARFQGGHNAGHTLVIDGKKTVLHLIPSGILHSGVTCFIGNGVVLAPDALMKEIHELEAQEVPVRERLKLSPACPLILPYHVALDQARELKRGEAKIGTTGRGIGPAYEDKVSRRGLRLGDLLHEERFATKLKEVMEYHNFALTQYYGAEAVDYQAVLDEALLLAKELRPMIVDVSDELHLAREAGKNILFEGAQGSLLDIDHGTYPFVTSSNTTAGGTATGSGFGPLYLDYVLGITKAYTTRVGAGPFPTELDCEVGEHLGVKGHEFGATTGRKRRTGWFDAVAVKHAVRINSMSGMCLTKLDVLDGLKEVKICVGYKNSAGEDVGIPCDAEGWEDIQPVYESLPGWSESTVGAKSVDALPQAARDYIARLEALVGITVDIISTGPDRVETIILKSPFA.

Residues 13-19 (GDEGKGK) and 41-43 (GHT) each bind GTP. Asp-14 acts as the Proton acceptor in catalysis. Positions 14 and 41 each coordinate Mg(2+). Residues 14–17 (DEGK), 39–42 (NAGH), Thr-130, Arg-144, Gln-225, Thr-240, and Arg-304 each bind IMP. The active-site Proton donor is His-42. 300–306 (ATTGRKR) serves as a coordination point for substrate. Residues Arg-306, 332 to 334 (KLD), and 414 to 416 (STG) contribute to the GTP site.

It belongs to the adenylosuccinate synthetase family. In terms of assembly, homodimer. Mg(2+) is required as a cofactor.

Its subcellular location is the cytoplasm. The catalysed reaction is IMP + L-aspartate + GTP = N(6)-(1,2-dicarboxyethyl)-AMP + GDP + phosphate + 2 H(+). It participates in purine metabolism; AMP biosynthesis via de novo pathway; AMP from IMP: step 1/2. Plays an important role in the de novo pathway of purine nucleotide biosynthesis. Catalyzes the first committed step in the biosynthesis of AMP from IMP. This chain is Adenylosuccinate synthetase, found in Teredinibacter turnerae (strain ATCC 39867 / T7901).